The sequence spans 180 residues: ATP synthase subunit delta (180 aa).

Belongs to the ATPase delta chain family. F-type ATPases have 2 components, F(1) - the catalytic core - and F(0) - the membrane proton channel. F(1) has five subunits: alpha(3), beta(3), gamma(1), delta(1), epsilon(1). F(0) has three main subunits: a(1), b(2) and c(10-14). The alpha and beta chains form an alternating ring which encloses part of the gamma chain. F(1) is attached to F(0) by a central stalk formed by the gamma and epsilon chains, while a peripheral stalk is formed by the delta and b chains.

The protein resides in the cell inner membrane. F(1)F(0) ATP synthase produces ATP from ADP in the presence of a proton or sodium gradient. F-type ATPases consist of two structural domains, F(1) containing the extramembraneous catalytic core and F(0) containing the membrane proton channel, linked together by a central stalk and a peripheral stalk. During catalysis, ATP synthesis in the catalytic domain of F(1) is coupled via a rotary mechanism of the central stalk subunits to proton translocation. Functionally, this protein is part of the stalk that links CF(0) to CF(1). It either transmits conformational changes from CF(0) to CF(1) or is implicated in proton conduction. This Cupriavidus necator (strain ATCC 17699 / DSM 428 / KCTC 22496 / NCIMB 10442 / H16 / Stanier 337) (Ralstonia eutropha) protein is ATP synthase subunit delta.